Reading from the N-terminus, the 228-residue chain is Archaeal flagellar ATP-binding protein FlaH (228 aa).

ATP is bound by residues glycine 30, threonine 31, lysine 33, serine 34, valine 35, glutamate 57, and lysine 191. A Mg(2+)-binding site is contributed by serine 34. Glutamate 57 is a binding site for Mg(2+).

It belongs to the FlaH family. The S.acidocaldarius archaellum assembly machinery and its filament consist of seven proteins (FlaB, FlaF, FlaG, FlaH, FlaI, FlaJ and FlaX). Interacts directly with the FlaX ring and the motor ATPase FlaI. Monomers, which can probably form homohexamers upon binding to ATP. In vitro, FlaH assembles as a second ring inside the FlaX ring.

It is found in the archaeal flagellum. It localises to the cytoplasm. In terms of biological role, component of the archaellum. FlaX, FlaH and FlaI form the core cytoplasmic motor complex of the crenarchaeal archaellum. FlaH binds ATP with high affinity but lacks detectable in vitro ATPase activity. ATP binding is essential for interaction with FlaI and for archaellum assembly. This Sulfolobus acidocaldarius (strain ATCC 33909 / DSM 639 / JCM 8929 / NBRC 15157 / NCIMB 11770) protein is Archaeal flagellar ATP-binding protein FlaH.